We begin with the raw amino-acid sequence, 1515 residues long: Adhesion G protein-coupled receptor L1 (1515 aa).

An N-terminal signal peptide occupies residues 1–24; it reads MARLAAALWSLCVTTVLVTSATQG. The Extracellular portion of the chain corresponds to 25–857; it reads LSRAGLPFGL…EIYQGRINEL (833 aa). The SUEL-type lectin domain maps to 40-129; sequence ACEGYPIELR…KYLEVQYDCV (90 aa). 5 cysteine pairs are disulfide-bonded: Cys-41-Cys-71, Cys-50-Cys-128, Cys-83-Cys-115, Cys-96-Cys-102, and Cys-140-Cys-322. Glu-42 provides a ligand contact to alpha-L-rhamnose. Asn-98 carries N-linked (GlcNAc...) asparagine glycosylation. 117–120 provides a ligand contact to alpha-L-rhamnose; that stretch reads GTYK. Positions 139-398 constitute an Olfactomedin-like domain; the sequence is VCPGTLQKVL…VVRYSLEFGP (260 aa). The segment at 400–468 is disordered; that stretch reads DPSAGPATSP…APAPSTRRPP (69 aa). A compositionally biased stretch (low complexity) spans 405–441; the sequence is PATSPPLSTTTTARPTPLTSTASPAATTPLRRAPLTT. The span at 453 to 468 shows a compositional bias: pro residues; the sequence is DLPPATAPAPSTRRPP. Cystine bridges form between Cys-480/Cys-515 and Cys-503/Cys-532. N-linked (GlcNAc...) asparagine glycosylation is found at Asn-531, Asn-640, Asn-741, Asn-800, Asn-805, and Asn-826. One can recognise a GAIN-B domain in the interval 669–850; it reads PARFLAAKQN…AVLMAHREIY (182 aa). 2 disulfide bridges follow: Cys-801/Cys-832 and Cys-820/Cys-834. The GPS stretch occupies residues 801 to 850; the sequence is CSFWNYSERSMLGYWSTQGCRLVESNKTHTTCACSHLTNFAVLMAHREIY. The chain crosses the membrane as a helical span at residues 858–878; the sequence is LLSVITWVGIVISLVCLAICI. The Cytoplasmic segment spans residues 879–892; that stretch reads STFCFLRGLQTDRN. The helical transmembrane segment at 893 to 913 threads the bilayer; the sequence is TIHKNLCINLFLAELLFLVGI. The Extracellular segment spans residues 914–919; the sequence is DKTQYE. The helical transmembrane segment at 920–940 threads the bilayer; sequence VACPIFAGLLHYFFLAAFSWL. At 941–964 the chain is on the cytoplasmic side; it reads CLEGVHLYLLLVEVFESEYSRTKY. The chain crosses the membrane as a helical span at residues 965 to 985; that stretch reads YYLGGYCFPALVVGIAAAIDY. Residues 986-1001 lie on the Extracellular side of the membrane; sequence RSYGTEKACWLRVDNY. The chain crosses the membrane as a helical span at residues 1002 to 1022; it reads FIWSFIGPVSFVIVVNLVFLM. Over 1023–1049 the chain is Cytoplasmic; sequence VTLHKMIRSSSVLKPDSSRLDNIKSWA. Residues 1050–1070 traverse the membrane as a helical segment; it reads LGAIALLFLLGLTWAFGLLFI. Topologically, residues 1071-1074 are extracellular; that stretch reads NKES. Residues 1075-1095 traverse the membrane as a helical segment; sequence VVMAYLFTTFNAFQGVFIFVF. Over 1096-1515 the chain is Cytoplasmic; the sequence is HCALQKKVHK…DGQMQLVTSL (420 aa). A disordered region spans residues 1144-1184; the sequence is TQVPGQGRHIHQVSLGPRGRSALPESQKDPGGQSGPGDPLT. Arg-1237 carries the post-translational modification Omega-N-methylarginine. Residue Ser-1263 is modified to Phosphoserine. Disordered stretches follow at residues 1291–1316, 1337–1369, 1401–1470, and 1492–1515; these read FNNS…RGRN, RGAS…PGGA, ESES…SRPP, and YLAA…VTSL. Pro residues-rich tracts occupy residues 1345 to 1356 and 1449 to 1461; these read GPPPEPPVPPVP and ALPP…PGPP. Phosphoserine occurs at positions 1497 and 1514.

This sequence belongs to the G-protein coupled receptor 2 family. Adhesion G-protein coupled receptor (ADGR) subfamily. As to quaternary structure, forms a heterodimer, consisting of a large extracellular region (p120) non-covalently linked to a seven-transmembrane moiety (p85). Interacts with syntaxin and with proteins of the SHANK family via the PDZ domain. Isoform 2 interacts with TENM2. Interacts (via extracellular domain) with FLRT1, FLRT2 and FLRT3 (via extracellular domain). In terms of processing, autoproteolytically cleaved into 2 subunits, an extracellular subunit and a seven-transmembrane subunit. This proteolytic processing takes place early in the biosynthetic pathway, either in the endoplasmic reticulum or in the early compartment of the Golgi apparatus. As to expression, expressed in the brain (at protein level). Brain specific distribution but low levels are also detected in most tissues.

Its subcellular location is the cell membrane. The protein localises to the cell projection. It is found in the axon. It localises to the growth cone. The protein resides in the synapse. Its subcellular location is the presynaptic cell membrane. The protein localises to the synaptosome. Its function is as follows. Calcium-independent receptor of high affinity for alpha-latrotoxin, an excitatory neurotoxin present in black widow spider venom which triggers massive exocytosis from neurons and neuroendocrine cells. Receptor probably implicated in the regulation of exocytosis. Functionally, receptor for TENM2 that mediates heterophilic synaptic cell-cell contact and postsynaptic specialization. The sequence is that of Adhesion G protein-coupled receptor L1 from Rattus norvegicus (Rat).